A 1164-amino-acid chain; its full sequence is DNA-directed RNA polymerase 133 kDa polypeptide (1164 aa).

This sequence belongs to the RNA polymerase beta chain family. In terms of assembly, the DNA-dependent RNA polymerase used for intermediate and late genes expression consists of eight subunits 147 kDa, 133 kDa, 35 kDa, 30 kDa, 22 kDa, 19 kDa, 18 kDa and 7 kDa totalling more than 500 kDa in mass. The same holoenzyme, with the addition of the transcription-specificity factor RAP94, is used for early gene expression.

Its subcellular location is the virion. The enzyme catalyses RNA(n) + a ribonucleoside 5'-triphosphate = RNA(n+1) + diphosphate. Functionally, part of the DNA-dependent RNA polymerase which catalyzes the transcription of viral DNA into RNA using the four ribonucleoside triphosphates as substrates. Responsible for the transcription of early, intermediate and late genes. DNA-dependent RNA polymerase associates with the early transcription factor (ETF), itself composed of D6 and A7, thereby allowing the early genes transcription. Late transcription, and probably also intermediate transcription, require newly synthesized RNA polymerase. The polypeptide is DNA-directed RNA polymerase 133 kDa polypeptide (RPO132) (Homo sapiens (Human)).